Reading from the N-terminus, the 654-residue chain is Acetyl-coenzyme A synthetase (654 aa).

CoA contacts are provided by residues 196-199 (RGGK) and threonine 316. ATP-binding positions include 392–394 (GEP), 416–421 (DTWWQT), aspartate 507, and arginine 522. Serine 530 contributes to the CoA binding site. Arginine 533 contacts ATP. Mg(2+) contacts are provided by valine 544 and valine 549. Lysine 619 carries the post-translational modification N6-acetyllysine.

This sequence belongs to the ATP-dependent AMP-binding enzyme family. Mg(2+) is required as a cofactor. In terms of processing, acetylated. Deacetylation by the SIR2-homolog deacetylase activates the enzyme.

It carries out the reaction acetate + ATP + CoA = acetyl-CoA + AMP + diphosphate. Catalyzes the conversion of acetate into acetyl-CoA (AcCoA), an essential intermediate at the junction of anabolic and catabolic pathways. AcsA undergoes a two-step reaction. In the first half reaction, AcsA combines acetate with ATP to form acetyl-adenylate (AcAMP) intermediate. In the second half reaction, it can then transfer the acetyl group from AcAMP to the sulfhydryl group of CoA, forming the product AcCoA. In Chromobacterium violaceum (strain ATCC 12472 / DSM 30191 / JCM 1249 / CCUG 213 / NBRC 12614 / NCIMB 9131 / NCTC 9757 / MK), this protein is Acetyl-coenzyme A synthetase.